A 615-amino-acid polypeptide reads, in one-letter code: Chaperone protein HscA (615 aa).

Belongs to the heat shock protein 70 family.

Its function is as follows. Chaperone involved in the maturation of iron-sulfur cluster-containing proteins. Has a low intrinsic ATPase activity which is markedly stimulated by HscB. Involved in the maturation of IscU. This chain is Chaperone protein HscA, found in Xenorhabdus nematophila (strain ATCC 19061 / DSM 3370 / CCUG 14189 / LMG 1036 / NCIMB 9965 / AN6).